The primary structure comprises 400 residues: Na(+)/H(+) antiporter NhaA (400 aa).

The next 12 membrane-spanning stretches (helical) occupy residues 26 to 46 (AGGILLLFSAVVAMLLANSPL), 71 to 91 (LIHWINDGFMAVFFVLVGMEV), 107 to 127 (IFPAIAAIGGMVIPAVVYWFI), 137 to 157 (GWAIPMATDIAFALGIMALLS), 166 to 186 (IFLLALAIIDDLGAIVVIALF), 189 to 209 (HGLSVQALIFSAVAIIVLILL), 212 to 232 (FKVSALCAYMVVGAILWASVL), 233 to 253 (KSGVHATLAGVIIGFSIPLKG), 273 to 293 (FVILPLFAFANAGVSFAGIDV), 299 to 319 (PLLLAIASGLIIGKPVGIFGF), 340 to 360 (IFAVAVLCGIGFTMSMFLASL), and 373 to 393 (LSRLGILLGSTVSAILGYLFL).

It belongs to the NhaA Na(+)/H(+) (TC 2.A.33) antiporter family.

It is found in the cell inner membrane. The enzyme catalyses Na(+)(in) + 2 H(+)(out) = Na(+)(out) + 2 H(+)(in). In terms of biological role, na(+)/H(+) antiporter that extrudes sodium in exchange for external protons. This Haemophilus influenzae (strain 86-028NP) protein is Na(+)/H(+) antiporter NhaA.